We begin with the raw amino-acid sequence, 279 residues long: MNQLEFVKLHGNGNDFILIDELNGERIPEDEKSEASRILCHRNFGIGGDGVLFLVPSERADIGMRLFQPDGSEAEMCGNGIRCLAKHAWESGYVGERFSVETLAGVIPIQVRRDRKGFWARVEMGIPRFERSEIPADGEGTFLKVPLHGFEVSAVNTGVPHAVIFVENLDIPVEQIAPKIRHSSCFPEGANVNFVRLGNHLEVRTFERGVEAETLSCGTGSVAAAAVARRLGLVGETVEVMTKGGPLRISFAGEKAFMEGPAVTVCRGVVSDEILQTLQ.

Asn-14 and Gln-68 together coordinate substrate. Cys-77 (proton donor) is an active-site residue. Substrate-binding positions include 78–79 (GN), Asn-191, and 207–208 (ER). The Proton acceptor role is filled by Cys-217. 218-219 (GT) is a substrate binding site.

The protein belongs to the diaminopimelate epimerase family. As to quaternary structure, homodimer.

The protein localises to the cytoplasm. The catalysed reaction is (2S,6S)-2,6-diaminopimelate = meso-2,6-diaminopimelate. It participates in amino-acid biosynthesis; L-lysine biosynthesis via DAP pathway; DL-2,6-diaminopimelate from LL-2,6-diaminopimelate: step 1/1. Its function is as follows. Catalyzes the stereoinversion of LL-2,6-diaminopimelate (L,L-DAP) to meso-diaminopimelate (meso-DAP), a precursor of L-lysine. The chain is Diaminopimelate epimerase from Methanothrix thermoacetophila (strain DSM 6194 / JCM 14653 / NBRC 101360 / PT) (Methanosaeta thermophila).